Here is a 152-residue protein sequence, read N- to C-terminus: Atypical leghemoglobin 2-1 (152 aa).

A Globin domain is found at 3–152; that stretch reads TFSEEQEALV…LAGVIKKGMS (150 aa). Tyr-31 is subject to Nitrated tyrosine. A heme b-binding site is contributed by Ser-46. Ser-46 is subject to Phosphoserine. His-64 is an O2 binding site. Lys-67, His-99, and Arg-102 together coordinate heme b. Tyr-140 carries the nitrated tyrosine modification.

It belongs to the plant globin family. In terms of assembly, monomer. In terms of processing, nitrated in effective nodules and particularly in hypoxic conditions; this mechanism may play a protective role in the symbiosis by buffering toxic peroxynitrite NO(2)(-). Nitration level decrease during nodule senescence. Phosphorylation at Ser-46 disrupts the molecular environment of its porphyrin ring oxygen binding pocket, thus leading to a reduced oxygen consumption and to the delivery of oxygen O(2) to symbiosomes. In terms of tissue distribution, mainly expressed in leaves and, at low levels, in roots of non-nodulated plants. However, accumulates also in nodules and roots, and, to a lower extent, in leaves, stems, flowers and fruits, in nodulated plants.

Functionally, atypical leghemoglobin that reversibly binds oxygen O(2) through a pentacoordinated heme iron. In nodules, facilitates the diffusion of oxygen to the bacteroids while preventing the bacterial nitrogenase from being inactivated by buffering dioxygen, nitric oxide and carbon monoxide. This role is essential for symbiotic nitrogen fixation (SNF). Seems not restricted to symbiotic nitrogen fixation and root nodules formation, but also contributes to general plant development and metabolism. This is Atypical leghemoglobin 2-1 from Lotus japonicus (Lotus corniculatus var. japonicus).